We begin with the raw amino-acid sequence, 616 residues long: Dihydroxy-acid dehydratase (616 aa).

Residue aspartate 81 participates in Mg(2+) binding. Cysteine 122 serves as a coordination point for [2Fe-2S] cluster. Positions 123 and 124 each coordinate Mg(2+). Lysine 124 bears the N6-carboxylysine mark. Cysteine 195 provides a ligand contact to [2Fe-2S] cluster. Position 491 (glutamate 491) interacts with Mg(2+). The Proton acceptor role is filled by serine 517.

Belongs to the IlvD/Edd family. In terms of assembly, homodimer. [2Fe-2S] cluster is required as a cofactor. It depends on Mg(2+) as a cofactor.

The catalysed reaction is (2R)-2,3-dihydroxy-3-methylbutanoate = 3-methyl-2-oxobutanoate + H2O. The enzyme catalyses (2R,3R)-2,3-dihydroxy-3-methylpentanoate = (S)-3-methyl-2-oxopentanoate + H2O. It functions in the pathway amino-acid biosynthesis; L-isoleucine biosynthesis; L-isoleucine from 2-oxobutanoate: step 3/4. It participates in amino-acid biosynthesis; L-valine biosynthesis; L-valine from pyruvate: step 3/4. In terms of biological role, functions in the biosynthesis of branched-chain amino acids. Catalyzes the dehydration of (2R,3R)-2,3-dihydroxy-3-methylpentanoate (2,3-dihydroxy-3-methylvalerate) into 2-oxo-3-methylpentanoate (2-oxo-3-methylvalerate) and of (2R)-2,3-dihydroxy-3-methylbutanoate (2,3-dihydroxyisovalerate) into 2-oxo-3-methylbutanoate (2-oxoisovalerate), the penultimate precursor to L-isoleucine and L-valine, respectively. The protein is Dihydroxy-acid dehydratase of Escherichia coli O127:H6 (strain E2348/69 / EPEC).